Reading from the N-terminus, the 782-residue chain is Polyribonucleotide nucleotidyltransferase (782 aa).

Residues Asp-514 and Asp-520 each contribute to the Mg(2+) site. The KH domain maps to 580–639 (PRIITIKIPVDQIGAVIGPKGKIINQIQDDTGAEITIEDDGTIYIGATEGTAAEAARAAI). The region spanning 651–723 (GERYLGTVVK…ARGKLSLVPV (73 aa)) is the S1 motif domain. Over residues 734–753 (AGAGESAASGGAPRSAGGPQ) the composition is skewed to low complexity. A disordered region spans residues 734 to 782 (AGAGESAASGGAPRSAGGPQPREHQGPGRPRGRGGDHGGEGRQRTRRRH). Residues 766–776 (RGGDHGGEGRQ) are compositionally biased toward basic and acidic residues.

This sequence belongs to the polyribonucleotide nucleotidyltransferase family. The cofactor is Mg(2+).

The protein resides in the cytoplasm. The enzyme catalyses RNA(n+1) + phosphate = RNA(n) + a ribonucleoside 5'-diphosphate. Its function is as follows. Involved in mRNA degradation. Catalyzes the phosphorolysis of single-stranded polyribonucleotides processively in the 3'- to 5'-direction. This chain is Polyribonucleotide nucleotidyltransferase, found in Acidothermus cellulolyticus (strain ATCC 43068 / DSM 8971 / 11B).